The sequence spans 404 residues: Cysteine desulfurase IscS (404 aa).

Pyridoxal 5'-phosphate-binding positions include 75–76 (AT), N155, Q183, and 203–205 (SGH). Position 206 is an N6-(pyridoxal phosphate)lysine (K206). T243 contributes to the pyridoxal 5'-phosphate binding site. The active-site Cysteine persulfide intermediate is the C328. C328 is a [2Fe-2S] cluster binding site.

It belongs to the class-V pyridoxal-phosphate-dependent aminotransferase family. NifS/IscS subfamily. Homodimer. Forms a heterotetramer with IscU, interacts with other sulfur acceptors. Requires pyridoxal 5'-phosphate as cofactor.

It localises to the cytoplasm. It catalyses the reaction (sulfur carrier)-H + L-cysteine = (sulfur carrier)-SH + L-alanine. It functions in the pathway cofactor biosynthesis; iron-sulfur cluster biosynthesis. Functionally, master enzyme that delivers sulfur to a number of partners involved in Fe-S cluster assembly, tRNA modification or cofactor biosynthesis. Catalyzes the removal of elemental sulfur atoms from cysteine to produce alanine. Functions as a sulfur delivery protein for Fe-S cluster synthesis onto IscU, an Fe-S scaffold assembly protein, as well as other S acceptor proteins. The chain is Cysteine desulfurase IscS from Edwardsiella ictaluri (strain 93-146).